The following is a 255-amino-acid chain: Myogenic factor 5 (255 aa).

Positions 83–134 (DRRKAATMRERRRLKKVNQAFETLKRCTTTNPNQRLPKVEILRNAIRYIESL) constitute a bHLH domain. The segment at 226 to 249 (DTASLSPATSANSQPATPGPSSSR) is disordered.

In terms of assembly, efficient DNA binding requires dimerization with another bHLH protein.

The protein localises to the nucleus. Its function is as follows. Acts as a transcriptional activator that promotes transcription of muscle-specific target genes and plays a role in muscle differentiation. Together with MYOG and MYOD1, co-occupies muscle-specific gene promoter core region during myogenesis. Induces fibroblasts to differentiate into myoblasts. Probable sequence specific DNA-binding protein. This chain is Myogenic factor 5 (Myf5), found in Mus musculus (Mouse).